The primary structure comprises 655 residues: p-hydroxybenzoic acid efflux pump subunit AaeB (655 aa).

The Periplasmic portion of the chain corresponds to 1–12 (MGIFSIANQHIR). Residues 13-33 (FAVKLATAIVLALFVGFHFQL) traverse the membrane as a helical segment. The Cytoplasmic segment spans residues 34–37 (ETPR). Residues 38–58 (WAVLTAAIVAAGPAFAAGGEP) form a helical membrane-spanning segment. The Periplasmic portion of the chain corresponds to 59–68 (YSGAIRYRGF). The helical transmembrane segment at 69 to 89 (LRIIGTFIGCIAGLVIIIAMI) threads the bilayer. Residues 90–92 (RAP) lie on the Cytoplasmic side of the membrane. Residues 93–113 (LLMILVCCIWAGFCTWISSLV) form a helical membrane-spanning segment. Topologically, residues 114–120 (RIENSYA) are periplasmic. The helical transmembrane segment at 121–141 (WGLAGYTALIIVITIQPEPLL) threads the bilayer. Residues 142 to 151 (TPQFAVERCS) are Cytoplasmic-facing. The helical transmembrane segment at 152-172 (EIVIGIVCAIMADLLFSPRSI) threads the bilayer. The Periplasmic segment spans residues 173 to 369 (KQEVDRELES…RTTLSCILGT (197 aa)). A helical membrane pass occupies residues 370 to 390 (LFWLWTGWTSGSGAMVMIAVV). Over 391-406 (TSLAMRLPNPRMVAID) the chain is Cytoplasmic. Residues 407-427 (FIYGTLAALPLGLLYFLVIIP) traverse the membrane as a helical segment. Topologically, residues 428–430 (NTQ) are periplasmic. Residues 431 to 451 (QSMLLLCISLAVLGFFLGIEV) traverse the membrane as a helical segment. Over 452–458 (QKRRLGS) the chain is Cytoplasmic. Residues 459-479 (MGALASTINIIVLDNPMTFHF) form a helical membrane-spanning segment. The Periplasmic portion of the chain corresponds to 480 to 481 (SQ). The chain crosses the membrane as a helical span at residues 482-502 (FLDSALGQIVGCVLAFTVILL). At 503-655 (VRDKSRDRTG…HKYQHALTDS (153 aa)) the chain is on the cytoplasmic side.

It belongs to the aromatic acid exporter ArAE (TC 2.A.85) family.

The protein resides in the cell inner membrane. Functionally, forms an efflux pump with AaeA. Could function as a metabolic relief valve, allowing to eliminate certain compounds when they accumulate to high levels in the cell. This is p-hydroxybenzoic acid efflux pump subunit AaeB from Shigella flexneri.